A 303-amino-acid polypeptide reads, in one-letter code: Putative S-adenosyl-L-methionine-dependent methyltransferase MSMEG_1479/MSMEI_1443 (303 aa).

Residues D130 and 159–160 (DL) contribute to the S-adenosyl-L-methionine site.

Belongs to the UPF0677 family.

Exhibits S-adenosyl-L-methionine-dependent methyltransferase activity. The polypeptide is Putative S-adenosyl-L-methionine-dependent methyltransferase MSMEG_1479/MSMEI_1443 (Mycolicibacterium smegmatis (strain ATCC 700084 / mc(2)155) (Mycobacterium smegmatis)).